We begin with the raw amino-acid sequence, 760 residues long: MSQGECPVKKVPNVAGSGTRNTDWWPNELRTNILRQHDPRQNPLGPDFNYVEEFKKLDYDALKKDLNALMTDSQDWWPADFGHYGGLFIRMAWHSAGTYRVTDGRGGGGDGQQRFAPLNAWPDNVSLDKARRLLWPIKQKYGNKISWADLMLLTGNVALESMGCPTFGFAGGRADTFQSDESVYWGGETEWLGSDVRYADGAKGVKGEGIMDGDQHKTDKSEPHTSRNLEQPLAAAHMGLIYVNPEGPEGIPDPVAAAHDIRTTFGRMAMNDAETAALIIGGHSFGKTHGAAPSENTGPDPNSEDLATQGFGWMNKHGRGNGPDTITSGLEVTWTGTPTKWSNKYLEYLYKFEWELEKSPAGANQWVAKTDEHIIPDAYDQNKKHKPRMLTTDLAMRMDPAYEKITRRWLEHPQELHDTFVRAWFKLLHRDMGPRSRWLGPEVPKEVLIWEDPVPQPEGELIGESDIATLKKQVLDAGVEPAKLIRTAWASAASFRGSDKRGGANGARIRLAPQKDWEVNNPKELAEVLKALEGVQSKFNSGSKKVSLADLIVLAGTAAVEKAAGVQVPFTPGRTDATQEQTDAKSFEHLEPVTDGFRNYGKGTDRVRTEQLDVDKAHLLRLTAPEMVVLTGGMRALNANWDGSSHGVFTKRPGQLTNDFFVNLLDNNLEWKAADSSKELYEGFDRKSGQKKWTATRHDLVFGHHPELRAVAETYAQADNTDKFVKDFVAGWEKIMNNDRFDIKNKSVSAQSRGANKPRL.

The interval 1–22 (MSQGECPVKKVPNVAGSGTRNT) is disordered. The tryptophyl-tyrosyl-methioninium (Trp-Tyr) (with M-268) cross-link spans 93–242 (WHSAGTYRVT…LAAAHMGLIY (150 aa)). Residue His-94 is the Proton acceptor of the active site. Positions 206 to 226 (KGEGIMDGDQHKTDKSEPHTS) are disordered. Basic and acidic residues predominate over residues 213–226 (GDQHKTDKSEPHTS). Residues 242–268 (YVNPEGPEGIPDPVAAAHDIRTTFGRM) constitute a cross-link (tryptophyl-tyrosyl-methioninium (Tyr-Met) (with W-93)). Residue His-283 coordinates heme b.

This sequence belongs to the peroxidase family. Peroxidase/catalase subfamily. As to quaternary structure, homodimer or homotetramer. Heme b is required as a cofactor. In terms of processing, formation of the three residue Trp-Tyr-Met cross-link is important for the catalase, but not the peroxidase activity of the enzyme.

Its subcellular location is the cytoplasm. It carries out the reaction H2O2 + AH2 = A + 2 H2O. The catalysed reaction is 2 H2O2 = O2 + 2 H2O. Its function is as follows. Bifunctional enzyme with both catalase and broad-spectrum peroxidase activity. The chain is Catalase-peroxidase from Pyrenophora tritici-repentis (strain Pt-1C-BFP) (Wheat tan spot fungus).